The primary structure comprises 139 residues: SPbeta prophage-derived uncharacterized protein YomN (139 aa).

In Bacillus subtilis (strain 168), this protein is SPbeta prophage-derived uncharacterized protein YomN (yomN).